A 187-amino-acid chain; its full sequence is UPF0340 protein str1894 (187 aa).

Belongs to the UPF0340 family.

In Streptococcus thermophilus (strain CNRZ 1066), this protein is UPF0340 protein str1894.